The chain runs to 264 residues: Ribosomal protein L11 methyltransferase (264 aa).

S-adenosyl-L-methionine-binding residues include threonine 116, glycine 137, aspartate 159, and asparagine 200.

It belongs to the methyltransferase superfamily. PrmA family.

It is found in the cytoplasm. It catalyses the reaction L-lysyl-[protein] + 3 S-adenosyl-L-methionine = N(6),N(6),N(6)-trimethyl-L-lysyl-[protein] + 3 S-adenosyl-L-homocysteine + 3 H(+). Methylates ribosomal protein L11. The polypeptide is Ribosomal protein L11 methyltransferase (Thermotoga maritima (strain ATCC 43589 / DSM 3109 / JCM 10099 / NBRC 100826 / MSB8)).